A 434-amino-acid chain; its full sequence is MSQTHLSTKKFADFPLKPEILAALNENGFEFCTPIQALSLPILLNAKDIAGQAQTGTGKTMAFLVATFNHLLNVAAPESRKATEPRAIIMAPTRELAIQIAKDAKLLAAHTGLKVGIVYGGESYETQRAVLDKGVDILIGTTGRIIDYVRQGVISLSHIQAVVLDEADRMFDLGFIKDIRFLFRRMPDAKSRLNMLFSATLSMKVQELAYDHMNDPEKVEIEPLEKTSKNIKEEIFYPSMEDKMRLLLSLIEEDWPDKAIVFSNTKHSCEKLWSYLEGDGHRVGLLTGDVPQKKRIRILEQFTSGEIDVLVATDVAARGLHISDVSHVYNYDLPDDCEDYVHRIGRTGRAGQKGISISFACEEYALNLPEIETYINHSIPVSNYDKDALLDDIPPPARIHRKPPTSRTRDGGSKGAHRSGGNTSRPPRHRTRRP.

Positions 9–37 (KKFADFPLKPEILAALNENGFEFCTPIQA) match the Q motif motif. One can recognise a Helicase ATP-binding domain in the interval 40–219 (LPILLNAKDI…YDHMNDPEKV (180 aa)). 53–60 (AQTGTGKT) provides a ligand contact to ATP. The DEAD box signature appears at 165–168 (DEAD). Residues 243–390 (KMRLLLSLIE…VSNYDKDALL (148 aa)) enclose the Helicase C-terminal domain. Positions 390–434 (LDDIPPPARIHRKPPTSRTRDGGSKGAHRSGGNTSRPPRHRTRRP) are disordered.

The protein belongs to the DEAD box helicase family. RhlB subfamily. Component of the RNA degradosome, which is a multiprotein complex involved in RNA processing and mRNA degradation.

It is found in the cytoplasm. The catalysed reaction is ATP + H2O = ADP + phosphate + H(+). In terms of biological role, DEAD-box RNA helicase involved in RNA degradation. Has RNA-dependent ATPase activity and unwinds double-stranded RNA. This Shewanella frigidimarina (strain NCIMB 400) protein is ATP-dependent RNA helicase RhlB.